Reading from the N-terminus, the 149-residue chain is Large ribosomal subunit protein bL9 (149 aa).

The protein belongs to the bacterial ribosomal protein bL9 family.

Its function is as follows. Binds to the 23S rRNA. The sequence is that of Large ribosomal subunit protein bL9 from Edwardsiella ictaluri (strain 93-146).